The primary structure comprises 409 residues: Torsin-4A (409 aa).

Positions 1-16 are enriched in basic and acidic residues; sequence MGEQDPSDRLRGDQLK. Disordered regions lie at residues 1–28 and 75–99; these read MGEQ…SFSQ and DNLH…KGRV. Polar residues predominate over residues 17 to 28; it reads EPNQNGKGSFSQ. Residues 88-98 are compositionally biased toward basic residues; that stretch reads PRKRKKKRKGR. Residues 120–136 form a helical membrane-spanning segment; it reads CLYLLCIIVFLQVYNAI. 192–199 contributes to the ATP binding site; that stretch reads GPTGVGKS.

It belongs to the ClpA/ClpB family. Torsin subfamily.

It localises to the membrane. In Danio rerio (Zebrafish), this protein is Torsin-4A (tor4a).